Reading from the N-terminus, the 286-residue chain is Thymidylate synthase (286 aa).

Arginine 27 contributes to the dUMP binding site. Histidine 57 contributes to the (6R)-5,10-methylene-5,6,7,8-tetrahydrofolate binding site. Position 148–149 (148–149 (RR)) interacts with dUMP. Residue cysteine 168 is the Nucleophile of the active site. Residues 188–191 (RSAD), asparagine 199, and 229–231 (HLY) contribute to the dUMP site. Aspartate 191 is a (6R)-5,10-methylene-5,6,7,8-tetrahydrofolate binding site. Alanine 285 is a binding site for (6R)-5,10-methylene-5,6,7,8-tetrahydrofolate.

It belongs to the thymidylate synthase family. Bacterial-type ThyA subfamily. In terms of assembly, homodimer.

It localises to the cytoplasm. The enzyme catalyses dUMP + (6R)-5,10-methylene-5,6,7,8-tetrahydrofolate = 7,8-dihydrofolate + dTMP. Its pathway is pyrimidine metabolism; dTTP biosynthesis. Functionally, catalyzes the reductive methylation of 2'-deoxyuridine-5'-monophosphate (dUMP) to 2'-deoxythymidine-5'-monophosphate (dTMP) while utilizing 5,10-methylenetetrahydrofolate (mTHF) as the methyl donor and reductant in the reaction, yielding dihydrofolate (DHF) as a by-product. This enzymatic reaction provides an intracellular de novo source of dTMP, an essential precursor for DNA biosynthesis. The polypeptide is Thymidylate synthase (Psychrobacter sp. (strain PRwf-1)).